The chain runs to 512 residues: Ribose import ATP-binding protein RbsA (512 aa).

2 ABC transporter domains span residues 6–242 (LELR…VNRE) and 252–496 (VPAG…TGAQ). 38-45 (GENGAGKS) is a binding site for ATP.

It belongs to the ABC transporter superfamily. Ribose importer (TC 3.A.1.2.1) family. The complex is composed of an ATP-binding protein (RbsA), two transmembrane proteins (RbsC) and a solute-binding protein (RbsB).

Its subcellular location is the cell inner membrane. The catalysed reaction is D-ribose(out) + ATP + H2O = D-ribose(in) + ADP + phosphate + H(+). In terms of biological role, part of the ABC transporter complex RbsABC involved in ribose import. Responsible for energy coupling to the transport system. This is Ribose import ATP-binding protein RbsA from Pseudomonas putida (strain ATCC 47054 / DSM 6125 / CFBP 8728 / NCIMB 11950 / KT2440).